Consider the following 179-residue polypeptide: Photosystem I assembly protein Ycf3 (179 aa).

3 TPR repeats span residues 29-62 (AFSY…EEDP), 66-99 (SYTL…NSNL), and 126-159 (NLEI…APDN).

It belongs to the Ycf3 family.

The protein resides in the plastid. Its subcellular location is the chloroplast thylakoid membrane. Its function is as follows. Essential for the assembly of the photosystem I (PSI) complex. May act as a chaperone-like factor to guide the assembly of the PSI subunits. The chain is Photosystem I assembly protein Ycf3 from Trieres chinensis (Marine centric diatom).